The following is a 416-amino-acid chain: tRNA (guanine-N(7)-)-methyltransferase non-catalytic subunit wuho (416 aa).

The tract at residues 47–88 is disordered; sequence TQSQESCPATATSTTAGKEPGGKEQQLAKQPEEGGTSASGSV. Residues 49–62 are compositionally biased toward polar residues; sequence SQESCPATATSTTA. WD repeat units follow at residues 89–130, 177–216, 220–258, and 317–357; these read ATST…ARLL, GHLS…DIHS, GHRE…ELLQ, and AGSW…PTTN.

This sequence belongs to the WD repeat TRM82 family. As to quaternary structure, forms a heterodimer with the catalytic subunit Mettl1. Interacts with mei-P26 and weakly interacts with bgcn; required for the function or formation of the mei-P26-bgcn-bam-sxl complex. Interacts with nanos; may be involved in mei-P26-dependent derepression of the BMP signaling pathway. Interacts with Myc; the interaction may be mediated by mei-P26 and may be involved in the regulation of ribosome biogenesis. In testis, it is present at high level in hub cells, a niche for germline stem cells of testis. Ubiquitously expressed in all testicular cells throughout spermatogenesis. Ubiquitously expressed in all germline and somatic cells of the ovary.

Its subcellular location is the nucleus. The protein resides in the cytoplasm. It participates in tRNA modification; N(7)-methylguanine-tRNA biosynthesis. Its function is as follows. Required for the Mettl1-dependent formation of N(7)-methylguanine at position 46 (m7G46) in tRNA. In the Mettl1-wuho methyltransferase complex, it is required to stabilize and induce conformational changes of the catalytic subunit. Required for binding of nanos mRNA and repression of translation by the mei-P26-bgcn-bam-sxl complex. May cooperate with mei-P26 and nanos to derepress the BMP signaling pathway. May cooperate with mei-P26 to suppress expression of a subset of microRNAs. May cooperate with mei-P26 to regulate bam expression levels in germline cells during gametogenesis. Required to promote mitosis to meiosis transition during gametogenesis. May regulate germline cell division in part by regulating ribosome biogenesis. This Drosophila erecta (Fruit fly) protein is tRNA (guanine-N(7)-)-methyltransferase non-catalytic subunit wuho.